The chain runs to 127 residues: Methylglyoxal synthase (127 aa).

The MGS-like domain maps to 1-127 (MEKKIALIAH…IKGLESLILR (127 aa)). Substrate contacts are provided by residues H10, K14, 36–39 (TGTT), and 56–57 (SG). D62 serves as the catalytic Proton donor/acceptor. H89 serves as a coordination point for substrate.

This sequence belongs to the methylglyoxal synthase family.

The catalysed reaction is dihydroxyacetone phosphate = methylglyoxal + phosphate. Functionally, catalyzes the formation of methylglyoxal from dihydroxyacetone phosphate. The chain is Methylglyoxal synthase from Borreliella afzelii (strain PKo) (Borrelia afzelii).